A 366-amino-acid polypeptide reads, in one-letter code: Ribosome-binding ATPase YchF (366 aa).

The region spanning 3–259 (LTAGIVGLPN…LEGEEKQMFL (257 aa)) is the OBG-type G domain. ATP is bound at residue 12–17 (NVGKST). Residues serine 16 and threonine 36 each contribute to the Mg(2+) site. Residues 281–364 (GLATYFTAGE…QDGDVIHFRF (84 aa)) enclose the TGS domain.

Belongs to the TRAFAC class OBG-HflX-like GTPase superfamily. OBG GTPase family. YchF/OLA1 subfamily. Requires Mg(2+) as cofactor.

Functionally, ATPase that binds to both the 70S ribosome and the 50S ribosomal subunit in a nucleotide-independent manner. This chain is Ribosome-binding ATPase YchF, found in Bacillus subtilis (strain 168).